A 115-amino-acid polypeptide reads, in one-letter code: Insulin-like peptide IlO1_i1 (115 aa).

An N-terminal signal peptide occupies residues 1-20; that stretch reads MFVYTTIMLLLLAEINHSQG. Cystine bridges form between Cys40–Cys101, Cys52–Cys114, and Cys100–Cys105. The propeptide at 59 to 93 is c peptide; sequence RRNRITGLDQRSIFESNLLAKRFLISRRQIVNNRR.

This sequence belongs to the insulin family. As to expression, expressed in tentacles.

It is found in the secreted. Heterodimer with unknown function. Surprisingly, the truncated synthetic analog (dimer of 27-58 and 94-115) does not bind to long insulin receptor (HIR-B) and insulin-like growth factor 1 receptor. This truncated synthetic analog shows very weak inhibitory activity on different voltage-gated channels. The protein is Insulin-like peptide IlO1_i1 of Oulactis sp. (Sea anemone).